Here is a 430-residue protein sequence, read N- to C-terminus: Asparagine--tRNA ligase (430 aa).

It belongs to the class-II aminoacyl-tRNA synthetase family. Homodimer.

The protein resides in the cytoplasm. It catalyses the reaction tRNA(Asn) + L-asparagine + ATP = L-asparaginyl-tRNA(Asn) + AMP + diphosphate + H(+). This chain is Asparagine--tRNA ligase, found in Oceanobacillus iheyensis (strain DSM 14371 / CIP 107618 / JCM 11309 / KCTC 3954 / HTE831).